The primary structure comprises 291 residues: START domain-containing protein 10 (291 aa).

Methionine 1 carries the post-translational modification N-acetylmethionine. The interval 1-20 (MEKLAASTEPQGPRPVLGRE) is disordered. The 211-residue stretch at 14–224 (RPVLGRESVQ…MYKACLKYPE (211 aa)) folds into the START domain. N6-succinyllysine occurs at positions 94, 197, and 202. A phosphoserine mark is found at serine 253 and serine 259. A disordered region spans residues 260 to 291 (LENIDESAVAESREERMGGAGGEGSDDDTSLT). Position 284 is a phosphoserine; by CK2 (serine 284). Serine 289 bears the Phosphoserine mark.

Phosphorylation at Ser-284 by CK2 negatively regulates lipid transfer activity, possibly by decreasing membrane association.

Its subcellular location is the cell projection. It localises to the cilium. The protein resides in the flagellum. It is found in the cytoplasm. The protein localises to the membrane. May play metabolic roles in sperm maturation or fertilization. Phospholipid transfer protein that preferentially selects lipid species containing a palmitoyl or stearoyl chain on the sn-1 and an unsaturated fatty acyl chain (18:1 or 18:2) on the sn-2 position. Able to transfer phosphatidylcholine (PC) and phosphatidyetanolamline (PE) between membranes. This chain is START domain-containing protein 10 (STARD10), found in Homo sapiens (Human).